Here is an 863-residue protein sequence, read N- to C-terminus: Chromatin assembly factor 1 subunit A (863 aa).

Disordered stretches follow at residues 1–353 (MVVV…EEKD), 423–466 (LNGL…PDRS), 513–579 (DSDE…RQRM), and 749–863 (VTRD…PATA). Positions 42 to 54 (LNPEPKECNEPKR) are enriched in basic and acidic residues. Position 111 is a phosphothreonine (Thr-111). Ser-118 bears the Phosphoserine mark. Residues 144 to 154 (SEGTTEPTIPL) show a composition bias toward low complexity. Composition is skewed to acidic residues over residues 155–168 (TEEE…EDVD) and 177–196 (QDSD…EQQQ). Over residues 205 to 237 (ESVLSTGSTSSASVIASSPEPSKSAPTTPASTS) the composition is skewed to low complexity. Basic and acidic residues-rich tracts occupy residues 254–353 (QEQE…EEKD) and 457–466 (QKADDGPDRS). 2 stretches are compositionally biased toward acidic residues: residues 513–524 (DSDEEWEEEEPG) and 532–547 (GDDD…DDDG). Residues 569–579 (DPEKQKVRQRM) are compositionally biased toward basic and acidic residues. Over residues 760 to 771 (NSPTTNSSTTPS) the composition is skewed to low complexity. The span at 806 to 815 (DTEDDEDDDC) shows a compositional bias: acidic residues. The segment covering 821–835 (QSGSSEQDINTSLPQ) has biased composition (polar residues). Residues 850–863 (TAALALPCPTPATA) are compositionally biased toward low complexity.

Belongs to the CHAF1A family.

It localises to the nucleus. In terms of biological role, acts as a component of the histone chaperone complex chromatin assembly factor 1 (CAF-1), which assembles histone octamers onto DNA during replication and repair. CAF-1 performs the first step of the nucleosome assembly process, bringing newly synthesized histones H3 and H4 to replicating DNA; histones H2A/H2B can bind to this chromatin precursor subsequent to DNA replication to complete the histone octamer. This chain is Chromatin assembly factor 1 subunit A (chaf1a), found in Danio rerio (Zebrafish).